The sequence spans 205 residues: Glycerol-3-phosphate acyltransferase (205 aa).

Over 1 to 3 the chain is Periplasmic; sequence MSA. The helical transmembrane segment at 4-24 threads the bilayer; it reads IAPGMILIAYLCGSISSAILV. Over 25–52 the chain is Cytoplasmic; sequence CRLCGLPDPRTSGSGNPGATNVLRIGGK. A helical membrane pass occupies residues 53–73; that stretch reads GAAVAVLIFDVLKGMLPVWGA. At 74–80 the chain is on the periplasmic side; the sequence is YELGVSP. A helical transmembrane segment spans residues 81–101; that stretch reads FWLGLIAIAACLGHIWPVFFG. The Cytoplasmic segment spans residues 102-111; that stretch reads FKGGKGVATA. Residues 112 to 132 form a helical membrane-spanning segment; that stretch reads FGAIAPIGWDLTGVMAGTWLL. Residues 133–137 are Periplasmic-facing; sequence TVLLS. Residues 138 to 158 form a helical membrane-spanning segment; sequence GYSSLGAIVSALIAPFYVWWF. Over 159-205 the chain is Cytoplasmic; the sequence is KPQFTFPVSMLSCLILLRHHDNIQRLWRRQETKIWTKFKRKREKDPE.

This sequence belongs to the PlsY family. Probably interacts with PlsX.

The protein resides in the cell inner membrane. The enzyme catalyses sn-glycerol 3-phosphate + an acyl-CoA = a 1-acyl-sn-glycero-3-phosphate + CoA. It carries out the reaction a fatty acyl-[ACP] + sn-glycerol 3-phosphate = a 1-acyl-sn-glycero-3-phosphate + holo-[ACP]. It functions in the pathway lipid metabolism; phospholipid metabolism. Its function is as follows. Catalyzes the transfer of an acyl group from acyl-ACP to glycerol-3-phosphate (G3P) to form lysophosphatidic acid (LPA). This enzyme can also utilize acyl-CoA as fatty acyl donor, but not acyl-PO(4). This is Glycerol-3-phosphate acyltransferase from Escherichia coli O8 (strain IAI1).